A 158-amino-acid chain; its full sequence is Trafficking protein particle complex subunit 6B (158 aa).

The protein belongs to the TRAPP small subunits family. BET3 subfamily. Homodimer. Part of a TRAPP complex. Heterodimer with TRAPPC3. The heterodimer TRAPPC6B-TRAPPC3 interacts with TRAPPC1 likely providing a core for TRAPP complex formation.

The protein resides in the golgi apparatus. It is found in the cis-Golgi network. It localises to the endoplasmic reticulum. Functionally, component of a transport protein particle (TRAPP) complex that may function in specific stages of inter-organelle traffic. Specifically involved in the early development of neural circuitry, likely by controlling the frequency and amplitude of intracellular calcium transients implicated in the regulation of neuron differentiation and survival. The polypeptide is Trafficking protein particle complex subunit 6B (Bos taurus (Bovine)).